We begin with the raw amino-acid sequence, 492 residues long: UTP--glucose-1-phosphate uridylyltransferase (492 aa).

UTP-binding positions include 110–113, Lys-124, Gln-183, and Gly-210; that span reads LNGG. 112–113 contributes to the substrate binding site; the sequence is GG. Position 124 (Lys-124) interacts with Mg(2+). Substrate contacts are provided by residues His-211 and 239–241; that span reads NID. Asp-241 and Lys-379 together coordinate UTP. Mg(2+) is bound at residue Asp-241. Lys-379 is an active-site residue. Positions 441 to 492 are oligomerization; the sequence is VLTVSGNVLFGKNVVLKGTVIILADEKSKICVPDGSVLEDNIIYGNLPIIDH.

The protein belongs to the UDPGP type 1 family. As to quaternary structure, homooctamer.

The catalysed reaction is alpha-D-glucose 1-phosphate + UTP + H(+) = UDP-alpha-D-glucose + diphosphate. Plays a central role as a glucosyl donor in cellular metabolic pathways. The protein is UTP--glucose-1-phosphate uridylyltransferase (UGP1) of Encephalitozoon cuniculi (strain GB-M1) (Microsporidian parasite).